Reading from the N-terminus, the 263-residue chain is 3-methyl-2-oxobutanoate hydroxymethyltransferase (263 aa).

Mg(2+)-binding residues include D46 and D85. Residues 46 to 47, D85, and K115 each bind 3-methyl-2-oxobutanoate; that span reads DS. E117 contributes to the Mg(2+) binding site. E180 acts as the Proton acceptor in catalysis.

It belongs to the PanB family. Homodecamer; pentamer of dimers. It depends on Mg(2+) as a cofactor.

The protein resides in the cytoplasm. It carries out the reaction 3-methyl-2-oxobutanoate + (6R)-5,10-methylene-5,6,7,8-tetrahydrofolate + H2O = 2-dehydropantoate + (6S)-5,6,7,8-tetrahydrofolate. Its pathway is cofactor biosynthesis; (R)-pantothenate biosynthesis; (R)-pantoate from 3-methyl-2-oxobutanoate: step 1/2. In terms of biological role, catalyzes the reversible reaction in which hydroxymethyl group from 5,10-methylenetetrahydrofolate is transferred onto alpha-ketoisovalerate to form ketopantoate. This is 3-methyl-2-oxobutanoate hydroxymethyltransferase from Corynebacterium diphtheriae (strain ATCC 700971 / NCTC 13129 / Biotype gravis).